The following is a 189-amino-acid chain: Transcriptional repressor NrdR (189 aa).

A zinc finger lies at 3 to 34 (CPFCRGDDSRVVDSREVEDGQAIRRRRSCSGC). An ATP-cone domain is found at 46 to 136 (LSVVKRSGVT…VYRAFSSVED (91 aa)). Positions 152–189 (RLPEGPEAAQGGPESKAGNGQAAGSGDPEGVKAEKSSE) are disordered. Residues 180 to 189 (EGVKAEKSSE) are compositionally biased toward basic and acidic residues.

The protein belongs to the NrdR family. The cofactor is Zn(2+).

Its function is as follows. Negatively regulates transcription of bacterial ribonucleotide reductase nrd genes and operons by binding to NrdR-boxes. The polypeptide is Transcriptional repressor NrdR (Saccharopolyspora erythraea (strain ATCC 11635 / DSM 40517 / JCM 4748 / NBRC 13426 / NCIMB 8594 / NRRL 2338)).